We begin with the raw amino-acid sequence, 1176 residues long: Pesticidal crystal protein Cry1Ag (1176 aa).

It belongs to the delta endotoxin family.

Functionally, promotes colloidosmotic lysis by binding to the midgut epithelial cells of many lepidopteran larvae. The protein is Pesticidal crystal protein Cry1Ag (cry1Ag) of Bacillus thuringiensis.